Here is a 508-residue protein sequence, read N- to C-terminus: Maturase K (508 aa).

Belongs to the intron maturase 2 family. MatK subfamily.

It localises to the plastid. It is found in the chloroplast. Its function is as follows. Usually encoded in the trnK tRNA gene intron. Probably assists in splicing its own and other chloroplast group II introns. This Huidobria chilensis (Loasa chilensis) protein is Maturase K.